A 316-amino-acid chain; its full sequence is Lipooligosaccharide heptosyltransferase 2 (316 aa).

This sequence belongs to the glycosyltransferase 9 family.

It carries out the reaction an L-alpha-D-Hep-(1-&gt;5)-[alpha-Kdo-(2-&gt;4)]-alpha-Kdo-(2-&gt;6)-lipid A + ADP-L-glycero-beta-D-manno-heptose = an L-alpha-D-Hep-(1-&gt;3)-L-alpha-D-Hep-(1-&gt;5)-[alpha-Kdo-(2-&gt;4)]-alpha-Kdo-(2-&gt;6)-lipid A + ADP + H(+). It functions in the pathway bacterial outer membrane biogenesis; LOS core biosynthesis. Glycosyltransferase involved in the biosynthesis of the core oligosaccharide region of lipooligosaccharide (LOS). Catalyzes the addition of the second heptose unit to the heptosyl-Kdo2-lipid A module. This chain is Lipooligosaccharide heptosyltransferase 2, found in Campylobacter jejuni subsp. jejuni serotype O:6 (strain 81116 / NCTC 11828).